Consider the following 311-residue polypeptide: Mycinamicin-resistance protein MyrB (311 aa).

S-adenosyl-L-methionine-binding residues include Asn-27, Leu-29, Gly-54, Glu-75, and Asp-98. Positions 272–311 (PAPAGRSVRARPGSVGPDRSLPPRGLRSGPPRARRRGGGA) are disordered. Residues 293-302 (PPRGLRSGPP) are compositionally biased toward low complexity.

It belongs to the class I-like SAM-binding methyltransferase superfamily. rRNA adenine N(6)-methyltransferase family.

Confers resistance to macrolide, lincosamide and streptogramin B antibiotics. The sequence is that of Mycinamicin-resistance protein MyrB (myrB) from Micromonospora griseorubida.